The sequence spans 169 residues: Probable metallophosphoesterase YsnB (169 aa).

Residues Asp8, His10, Asp35, Asn54, His78, His107, and His109 each contribute to the Mn(2+) site.

It belongs to the metallophosphoesterase superfamily. YfcE family. It depends on Mn(2+) as a cofactor.

The chain is Probable metallophosphoesterase YsnB (ysnB) from Bacillus subtilis (strain 168).